Here is a 189-residue protein sequence, read N- to C-terminus: Probable RNA 2'-phosphotransferase (189 aa).

The protein belongs to the KptA/TPT1 family.

Its function is as follows. Removes the 2'-phosphate from RNA via an intermediate in which the phosphate is ADP-ribosylated by NAD followed by a presumed transesterification to release the RNA and generate ADP-ribose 1''-2''-cyclic phosphate (APPR&gt;P). May function as an ADP-ribosylase. The polypeptide is Probable RNA 2'-phosphotransferase (Streptomyces griseus subsp. griseus (strain JCM 4626 / CBS 651.72 / NBRC 13350 / KCC S-0626 / ISP 5235)).